The sequence spans 60 residues: Large ribosomal subunit protein bL32 (60 aa).

The span at 1-16 shows a compositional bias: basic residues; it reads MAVPRRKTSPSRRGMR. Residues 1–60 are disordered; sequence MAVPRRKTSPSRRGMRRSADALKRPTYAEDKDSGELRRPHHLDLKTGMYKGRQVIKKKDA. Basic and acidic residues predominate over residues 17 to 44; it reads RSADALKRPTYAEDKDSGELRRPHHLDL.

It belongs to the bacterial ribosomal protein bL32 family.

This is Large ribosomal subunit protein bL32 from Rhodopseudomonas palustris (strain BisB5).